We begin with the raw amino-acid sequence, 284 residues long: Putative ribosome biogenesis protein C306.07c (284 aa).

The segment at 264 to 284 (LKKSELRAQKRGSSGEGKGNK) is disordered.

The protein belongs to the universal ribosomal protein uL1 family. Highly divergent. Component of the 90S pre-ribosomes.

The protein resides in the nucleus. It localises to the nucleolus. In terms of biological role, involved in rRNA-processing and ribosome biosynthesis. This chain is Putative ribosome biogenesis protein C306.07c, found in Schizosaccharomyces pombe (strain 972 / ATCC 24843) (Fission yeast).